Consider the following 104-residue polypeptide: Phosphoribosyl-ATP pyrophosphatase (104 aa).

This sequence belongs to the PRA-PH family.

It localises to the cytoplasm. It carries out the reaction 1-(5-phospho-beta-D-ribosyl)-ATP + H2O = 1-(5-phospho-beta-D-ribosyl)-5'-AMP + diphosphate + H(+). The protein operates within amino-acid biosynthesis; L-histidine biosynthesis; L-histidine from 5-phospho-alpha-D-ribose 1-diphosphate: step 2/9. The polypeptide is Phosphoribosyl-ATP pyrophosphatase (Nitrosococcus oceani (strain ATCC 19707 / BCRC 17464 / JCM 30415 / NCIMB 11848 / C-107)).